Here is a 244-residue protein sequence, read N- to C-terminus: Capsid protein (244 aa).

The short motif at 1–24 (MSTSKRKRADEAQWNKRSTKKKGS) is the Bipartite nuclear localization signal element. Residues 1–39 (MSTSKRKRADEAQWNKRSTKKKGSAPQAKKPGGKVEKPS) are disordered.

Belongs to the geminiviridae capsid protein family. Homomultimer. Interacts with the movement protein. Binds to single-stranded and double-stranded viral DNA.

The protein localises to the virion. Its subcellular location is the host nucleus. Encapsidates the viral genome into characteristic twinned ('geminate') particles. Binds the genomic viral ssDNA and shuttles it into and out of the cell nucleus. Plays a role in protection of the genome from degradation, virus acquisition and transmission by insect vectors, infectivity, and systemic movement. The CP of monopartite geminiviruses is absolutely essential for virus movement. The sequence is that of Capsid protein from Avena sativa (Oat).